The following is a 302-amino-acid chain: Urease accessory protein UreD 2 (302 aa).

This sequence belongs to the UreD family. As to quaternary structure, ureD, UreF and UreG form a complex that acts as a GTP-hydrolysis-dependent molecular chaperone, activating the urease apoprotein by helping to assemble the nickel containing metallocenter of UreC. The UreE protein probably delivers the nickel.

The protein localises to the cytoplasm. Functionally, required for maturation of urease via the functional incorporation of the urease nickel metallocenter. The sequence is that of Urease accessory protein UreD 2 from Brucella ovis (strain ATCC 25840 / 63/290 / NCTC 10512).